The following is a 124-amino-acid chain: Small ribosomal subunit protein uS13 (124 aa).

The segment at 98-124 is disordered; that stretch reads VRGQRTRCNARTRKGPRKTVGAKRKEK.

Belongs to the universal ribosomal protein uS13 family. As to quaternary structure, part of the 30S ribosomal subunit. Forms a loose heterodimer with protein S19. Forms two bridges to the 50S subunit in the 70S ribosome.

Its function is as follows. Located at the top of the head of the 30S subunit, it contacts several helices of the 16S rRNA. In the 70S ribosome it contacts the 23S rRNA (bridge B1a) and protein L5 of the 50S subunit (bridge B1b), connecting the 2 subunits; these bridges are implicated in subunit movement. Contacts the tRNAs in the A and P-sites. The chain is Small ribosomal subunit protein uS13 from Dictyoglomus thermophilum (strain ATCC 35947 / DSM 3960 / H-6-12).